A 251-amino-acid chain; its full sequence is Triosephosphate isomerase (251 aa).

9 to 11 (NWK) is a binding site for substrate. Catalysis depends on H94, which acts as the Electrophile. The Proton acceptor role is filled by E166. Substrate is bound by residues G172, S211, and 232 to 233 (GG).

This sequence belongs to the triosephosphate isomerase family. In terms of assembly, homodimer.

The protein resides in the cytoplasm. The catalysed reaction is D-glyceraldehyde 3-phosphate = dihydroxyacetone phosphate. It functions in the pathway carbohydrate biosynthesis; gluconeogenesis. It participates in carbohydrate degradation; glycolysis; D-glyceraldehyde 3-phosphate from glycerone phosphate: step 1/1. Its function is as follows. Involved in the gluconeogenesis. Catalyzes stereospecifically the conversion of dihydroxyacetone phosphate (DHAP) to D-glyceraldehyde-3-phosphate (G3P). In Xanthomonas euvesicatoria pv. vesicatoria (strain 85-10) (Xanthomonas campestris pv. vesicatoria), this protein is Triosephosphate isomerase.